Here is a 187-residue protein sequence, read N- to C-terminus: Elongation factor P (187 aa).

It belongs to the elongation factor P family.

Its subcellular location is the cytoplasm. It participates in protein biosynthesis; polypeptide chain elongation. Its function is as follows. Involved in peptide bond synthesis. Stimulates efficient translation and peptide-bond synthesis on native or reconstituted 70S ribosomes in vitro. Probably functions indirectly by altering the affinity of the ribosome for aminoacyl-tRNA, thus increasing their reactivity as acceptors for peptidyl transferase. This is Elongation factor P from Ruegeria sp. (strain TM1040) (Silicibacter sp.).